A 365-amino-acid chain; its full sequence is Methylthioribose-1-phosphate isomerase (365 aa).

Substrate is bound by residues 53-55 (RGA), Arg-90, and Gln-201. Residue Asp-242 is the Proton donor of the active site. Position 252 to 253 (252 to 253 (NK)) interacts with substrate.

It belongs to the eIF-2B alpha/beta/delta subunits family. MtnA subfamily.

It carries out the reaction 5-(methylsulfanyl)-alpha-D-ribose 1-phosphate = 5-(methylsulfanyl)-D-ribulose 1-phosphate. Its pathway is amino-acid biosynthesis; L-methionine biosynthesis via salvage pathway; L-methionine from S-methyl-5-thio-alpha-D-ribose 1-phosphate: step 1/6. Its function is as follows. Catalyzes the interconversion of methylthioribose-1-phosphate (MTR-1-P) into methylthioribulose-1-phosphate (MTRu-1-P). The protein is Methylthioribose-1-phosphate isomerase of Methylorubrum extorquens (strain CM4 / NCIMB 13688) (Methylobacterium extorquens).